A 188-amino-acid polypeptide reads, in one-letter code: Ribosome maturation factor RimM (188 aa).

The region spanning 96–169 (DDEFYYADLE…TLLIDPLAAG (74 aa)) is the PRC barrel domain.

This sequence belongs to the RimM family. In terms of assembly, binds ribosomal protein uS19.

The protein resides in the cytoplasm. In terms of biological role, an accessory protein needed during the final step in the assembly of 30S ribosomal subunit, possibly for assembly of the head region. Essential for efficient processing of 16S rRNA. May be needed both before and after RbfA during the maturation of 16S rRNA. It has affinity for free ribosomal 30S subunits but not for 70S ribosomes. This Rhizobium etli (strain ATCC 51251 / DSM 11541 / JCM 21823 / NBRC 15573 / CFN 42) protein is Ribosome maturation factor RimM.